The primary structure comprises 162 residues: Interleukin-15 (162 aa).

An N-terminal signal peptide occupies residues 1–29 (MRISKPSLRSTSIQCYLCFLLNSHLITEA). Positions 30–48 (GIHVFVWGCISAGLPKTEA) are excised as a propeptide. Intrachain disulfides connect Cys-83–Cys-133 and Cys-90–Cys-136. N-linked (GlcNAc...) asparagine glycosylation is found at Asn-119 and Asn-127.

This sequence belongs to the IL-15/IL-21 family.

Its subcellular location is the secreted. Functionally, cytokine that plays a major role in the development of inflammatory and protective immune responses to microbial invaders and parasites by modulating immune cells of both the innate and adaptive immune systems. Stimulates the proliferation of natural killer cells, T-cells and B-cells and promotes the secretion of several cytokines. In monocytes, induces the production of IL8 and monocyte chemotactic protein 1/CCL2, two chemokines that attract neutrophils and monocytes respectively to sites of infection. Unlike most cytokines, which are secreted in soluble form, IL15 is expressed in association with its high affinity IL15RA on the surface of IL15-producing cells and delivers signals to target cells that express IL2RB and IL2RG receptor subunits. Binding to its receptor triggers the phosphorylation of JAK1 and JAK3 and the recruitment and subsequent phosphorylation of signal transducer and activator of transcription-3/STAT3 and STAT5. In mast cells, induces the rapid tyrosine phosphorylation of STAT6 and thereby controls mast cell survival and release of cytokines such as IL4. The protein is Interleukin-15 (IL15) of Cavia porcellus (Guinea pig).